Here is a 183-residue protein sequence, read N- to C-terminus: A-type ATP synthase subunit E (183 aa).

Belongs to the V-ATPase E subunit family. As to quaternary structure, has multiple subunits with at least A(3), B(3), C, D, E, F, H, I and proteolipid K(x).

The protein localises to the cell membrane. Its function is as follows. Component of the A-type ATP synthase that produces ATP from ADP in the presence of a proton gradient across the membrane. This is A-type ATP synthase subunit E from Methanosarcina barkeri (strain Fusaro / DSM 804).